The chain runs to 225 residues: Probable iron export ATP-binding protein FetA (225 aa).

Positions 8 to 225 constitute an ABC transporter domain; that stretch reads LQLQNVGYLA…EMQEARYELA (218 aa). 40-47 is an ATP binding site; it reads GPSGCGKS.

It belongs to the ABC transporter superfamily. The complex is composed of two ATP-binding proteins (FetA) and two transmembrane proteins (FetB).

The protein resides in the cell inner membrane. Part of the ABC transporter complex FetAB, which is probably involved in iron export and enhances resistance to H(2)O(2)-mediated oxidative stress. Probably responsible for energy coupling to the transport system. The sequence is that of Probable iron export ATP-binding protein FetA (fetA) from Escherichia coli (strain K12).